The primary structure comprises 162 residues: NADH-quinone oxidoreductase subunit I (162 aa).

4Fe-4S ferredoxin-type domains are found at residues 53–83 and 93–122; these read LRRY…IEPE and RRYD…EGPN. [4Fe-4S] cluster-binding residues include cysteine 63, cysteine 66, cysteine 69, cysteine 73, cysteine 102, cysteine 105, cysteine 108, and cysteine 112.

Belongs to the complex I 23 kDa subunit family. As to quaternary structure, NDH-1 is composed of 14 different subunits. Subunits NuoA, H, J, K, L, M, N constitute the membrane sector of the complex. It depends on [4Fe-4S] cluster as a cofactor.

It localises to the cell inner membrane. It catalyses the reaction a quinone + NADH + 5 H(+)(in) = a quinol + NAD(+) + 4 H(+)(out). Its function is as follows. NDH-1 shuttles electrons from NADH, via FMN and iron-sulfur (Fe-S) centers, to quinones in the respiratory chain. The immediate electron acceptor for the enzyme in this species is believed to be ubiquinone. Couples the redox reaction to proton translocation (for every two electrons transferred, four hydrogen ions are translocated across the cytoplasmic membrane), and thus conserves the redox energy in a proton gradient. This is NADH-quinone oxidoreductase subunit I from Paramagnetospirillum magneticum (strain ATCC 700264 / AMB-1) (Magnetospirillum magneticum).